We begin with the raw amino-acid sequence, 132 residues long: MASRMGMVAIVSLFVCALVASTSVNANVWQTDEDAFYSTNKLGVNGNMEMAQQQSGFIGHRPRLASFNRASKQLDSEKRPVPSGPDPIHHSIPSHAPQHPPSYGKAPYEDDRSRASPGLSNPIGPPPFLDRY.

The N-terminal stretch at 1–26 (MASRMGMVAIVSLFVCALVASTSVNA) is a signal peptide. A disordered region spans residues 68–132 (NRASKQLDSE…IGPPPFLDRY (65 aa)). Hydroxyproline occurs at positions 82 and 85. An O-linked (Ara...) hydroxyproline glycan is attached at P85. Positions 123-132 (IGPPPFLDRY) are enriched in pro residues.

This sequence belongs to the CLV3/ESR signal peptide family. In terms of processing, the O-glycosylation (arabinosylation) of the hydroxyproline Pro-85 enhances binding affinity of the ESR2p peptide for its receptor. In terms of tissue distribution, seed endosperm.

The protein resides in the secreted. It is found in the extracellular space. Functionally, extracellular signal peptide that regulates cell fate. This is CLAVATA3/ESR (CLE)-related protein ESR2 from Zea mays (Maize).